A 228-amino-acid chain; its full sequence is Protein-L-isoaspartate O-methyltransferase (228 aa).

Residues 1–20 (MVAVSLKMSQPAAPPPPMGE) are disordered. Residue serine 76 is part of the active site.

The protein belongs to the methyltransferase superfamily. L-isoaspartyl/D-aspartyl protein methyltransferase family.

It localises to the cytoplasm. The enzyme catalyses [protein]-L-isoaspartate + S-adenosyl-L-methionine = [protein]-L-isoaspartate alpha-methyl ester + S-adenosyl-L-homocysteine. Functionally, catalyzes the methyl esterification of L-isoaspartyl residues in peptides and proteins that result from spontaneous decomposition of normal L-aspartyl and L-asparaginyl residues. It plays a role in the repair and/or degradation of damaged proteins. This is Protein-L-isoaspartate O-methyltransferase from Magnetococcus marinus (strain ATCC BAA-1437 / JCM 17883 / MC-1).